The following is a 977-amino-acid chain: Kinesin-like protein KIN-14D (977 aa).

A compositionally biased stretch (low complexity) spans 1 to 13 (MSSSNNAAAAAAS). Residues 1-20 (MSSSNNAAAAAASPDPSRRR) form a disordered region. In terms of domain architecture, Calponin-homology (CH) spans 17-118 (SRRREDVVGW…CILALKDRFG (102 aa)). Positions 297-384 (KAEETQRIED…TKRRIELEEL (88 aa)) form a coiled coil. The Kinesin motor domain occupies 472-800 (NIRVYCRIRP…LKFAERVSGV (329 aa)). Position 556–563 (556–563 (GQTGSGKT)) interacts with ATP. The stretch at 812–847 (KEGKDVKELMDQLSLLKDTISKKDEEIDRLQLLNSS) forms a coiled coil. Positions 852-977 (PTRQADSVLK…RNNSTLKRGP (126 aa)) are disordered. Composition is skewed to polar residues over residues 861-879 (KHSS…TSVG) and 956-977 (RKSS…KRGP).

It belongs to the TRAFAC class myosin-kinesin ATPase superfamily. Kinesin family. KIN-14 subfamily.

This is Kinesin-like protein KIN-14D from Oryza sativa subsp. japonica (Rice).